A 244-amino-acid chain; its full sequence is Triosephosphate isomerase (244 aa).

Substrate is bound at residue 9–11 (NWK). His93 (electrophile) is an active-site residue. Glu161 acts as the Proton acceptor in catalysis. Substrate-binding positions include Gly167, Ser206, and 227–228 (GG).

Belongs to the triosephosphate isomerase family. Homodimer.

The protein resides in the cytoplasm. The catalysed reaction is D-glyceraldehyde 3-phosphate = dihydroxyacetone phosphate. It functions in the pathway carbohydrate biosynthesis; gluconeogenesis. It participates in carbohydrate degradation; glycolysis; D-glyceraldehyde 3-phosphate from glycerone phosphate: step 1/1. Involved in the gluconeogenesis. Catalyzes stereospecifically the conversion of dihydroxyacetone phosphate (DHAP) to D-glyceraldehyde-3-phosphate (G3P). The sequence is that of Triosephosphate isomerase from Deinococcus geothermalis (strain DSM 11300 / CIP 105573 / AG-3a).